A 326-amino-acid chain; its full sequence is GTP 3',8-cyclase (326 aa).

The 226-residue stretch at 7 to 232 (GFGRSFPYLR…PRAADAGPAR (226 aa)) folds into the Radical SAM core domain. Residue R16 coordinates GTP. The [4Fe-4S] cluster site is built by C23 and C27. S-adenosyl-L-methionine is bound at residue Y29. C30 contacts [4Fe-4S] cluster. Position 65 (R65) interacts with GTP. Residue G69 participates in S-adenosyl-L-methionine binding. T96 serves as a coordination point for GTP. S120 lines the S-adenosyl-L-methionine pocket. Residue K157 coordinates GTP. S-adenosyl-L-methionine is bound at residue M191. Residues C254 and C257 each coordinate [4Fe-4S] cluster. 259–261 (RLR) contacts GTP. C271 serves as a coordination point for [4Fe-4S] cluster.

The protein belongs to the radical SAM superfamily. MoaA family. Monomer and homodimer. The cofactor is [4Fe-4S] cluster.

It carries out the reaction GTP + AH2 + S-adenosyl-L-methionine = (8S)-3',8-cyclo-7,8-dihydroguanosine 5'-triphosphate + 5'-deoxyadenosine + L-methionine + A + H(+). Its pathway is cofactor biosynthesis; molybdopterin biosynthesis. Its function is as follows. Catalyzes the cyclization of GTP to (8S)-3',8-cyclo-7,8-dihydroguanosine 5'-triphosphate. In Stenotrophomonas maltophilia (strain K279a), this protein is GTP 3',8-cyclase.